The chain runs to 497 residues: ADP-dependent glucokinase (497 aa).

An N-terminal signal peptide occupies residues 1–22; it reads MALWRGSAYAGFLALAVGCVFL. In terms of domain architecture, ADPK spans 52 to 497; sequence SPEGRLAAAW…LFYSEVHPHL (446 aa). Mg(2+) is bound by residues glutamate 297, glutamate 328, and aspartate 481. Aspartate 481 acts as the Proton acceptor in catalysis.

It belongs to the ADP-dependent glucokinase family. In terms of assembly, monomer. The cofactor is Mg(2+).

The protein resides in the secreted. It catalyses the reaction D-glucose + ADP = D-glucose 6-phosphate + AMP + H(+). It participates in carbohydrate degradation; glycolysis. Catalyzes the phosphorylation of D-glucose to D-glucose 6-phosphate using ADP as the phosphate donor. GDP and CDP can replace ADP, but with reduced efficiency. This is ADP-dependent glucokinase (ADPGK) from Bos taurus (Bovine).